The primary structure comprises 1239 residues: DNA-directed RNA polymerase subunit beta (1239 aa).

The segment at 1182–1239 (IEGAENQLEDKEEKEEEKEENYKEDSDEYDDLREEDVEPDLEELSLDDLDLDDFGDEH) is disordered. Acidic residues-rich tracts occupy residues 1191-1200 (DKEEKEEEKE) and 1206-1239 (DSDE…GDEH).

The protein belongs to the RNA polymerase beta chain family. In terms of assembly, the RNAP catalytic core consists of 2 alpha, 1 beta, 1 beta' and 1 omega subunit. When a sigma factor is associated with the core the holoenzyme is formed, which can initiate transcription.

It catalyses the reaction RNA(n) + a ribonucleoside 5'-triphosphate = RNA(n+1) + diphosphate. Its function is as follows. DNA-dependent RNA polymerase catalyzes the transcription of DNA into RNA using the four ribonucleoside triphosphates as substrates. The chain is DNA-directed RNA polymerase subunit beta from Clostridium botulinum (strain Loch Maree / Type A3).